The primary structure comprises 93 residues: Cytochrome c (93 aa).

The span at 1-13 (AALPPGDAAAAQG) shows a compositional bias: low complexity. The disordered stretch occupies residues 1-21 (AALPPGDAAAAQGGSNGVGPN). Met-70 serves as a coordination point for heme c.

It belongs to the cytochrome c family. Post-translationally, binds 1 heme c group covalently per subunit.

It is found in the mitochondrion intermembrane space. Electron carrier protein. The oxidized form of the cytochrome c heme group can accept an electron from the heme group of the cytochrome c1 subunit of cytochrome reductase. Cytochrome c then transfers this electron to the cytochrome oxidase complex, the final protein carrier in the mitochondrial electron-transport chain. This is Cytochrome c from Trypanosoma brucei brucei.